The chain runs to 236 residues: Thiamine import ATP-binding protein ThiQ (236 aa).

The ABC transporter domain occupies 2–230 (LKLEKITYLY…SAAKASVLGI (229 aa)). 32–39 (GPSGAGKS) contacts ATP.

It belongs to the ABC transporter superfamily. Thiamine importer (TC 3.A.1.19.1) family. In terms of assembly, the complex is composed of two ATP-binding proteins (ThiQ), two transmembrane proteins (ThiP) and a solute-binding protein (ThiB).

Its subcellular location is the cell inner membrane. The catalysed reaction is thiamine(out) + ATP + H2O = thiamine(in) + ADP + phosphate + H(+). Part of the ABC transporter complex ThiBPQ involved in thiamine import. Responsible for energy coupling to the transport system. The polypeptide is Thiamine import ATP-binding protein ThiQ (Yersinia pestis bv. Antiqua (strain Antiqua)).